Consider the following 200-residue polypeptide: Thymidine kinase (200 aa).

ATP contacts are provided by residues 15 to 22 (GPMYSGKS) and 88 to 91 (DEVQ). Residue glutamate 89 is the Proton acceptor of the active site. 4 residues coordinate Zn(2+): cysteine 145, cysteine 148, cysteine 177, and cysteine 180.

This sequence belongs to the thymidine kinase family. As to quaternary structure, homotetramer.

It localises to the cytoplasm. It catalyses the reaction thymidine + ATP = dTMP + ADP + H(+). This is Thymidine kinase from Mycoplasma mobile (strain ATCC 43663 / 163K / NCTC 11711) (Mesomycoplasma mobile).